The sequence spans 718 residues: Heme peroxidase 2 (718 aa).

The N-terminal stretch at 1 to 19 (MNLKPTILLFTILFLKCAT) is a signal peptide. Positions 20-146 (FEVNEETERI…QANRRCSSPP (127 aa)) are excised as a propeptide. Disordered stretches follow at residues 41–64 (RASE…ANSD) and 108–144 (LLQS…RCSS). The segment covering 45-64 (NSESEQTSQHIIVSQQANSD) has biased composition (polar residues). The segment covering 109–118 (LQSSETTTTT) has biased composition (low complexity). The segment covering 126-139 (SKRSAIFRSKRQAN) has biased composition (basic residues). A disulfide bridge connects residues C149 and C164. The Proton acceptor role is filled by H241. Ca(2+) is bound at residue D242. Residues C262 and C272 are joined by a disulfide bond. Ca(2+) contacts are provided by S311, F313, D315, and S317. N354 is a glycosylation site (N-linked (GlcNAc...) asparagine). C358 and C366 are joined by a disulfide. Residue H477 participates in heme b binding. N-linked (GlcNAc...) asparagine glycosylation is found at N551, N592, N662, and N673. C682 and C705 are oxidised to a cystine.

The protein belongs to the peroxidase family. Heme b is required as a cofactor. In terms of tissue distribution, expressed in the hypodermis and gland cells of the pharynx. Specifically, there is low and transient expression from the distal bulb of the pharynx to the anterior of the buccal cavity. Whole body expression levels increase upon entry into the dauer phase.

The protein localises to the secreted. It carries out the reaction 2 a phenolic donor + H2O2 = 2 a phenolic radical donor + 2 H2O. In terms of biological role, peroxidase which is involved in maintaining the cuticle integrity in the hypodermis and pharynx. It thus plays a role in conferring resistance against Gram-positive bacteria such as E.faecalis, S.aureus and C.diphtheriae, and yeast such as C.albicans. This Caenorhabditis elegans protein is Heme peroxidase 2.